Reading from the N-terminus, the 367-residue chain is Molybdopterin synthase catalytic subunit (367 aa).

Substrate-binding positions include 101-102 (HR), Lys-117, and 124-126 (KKE). The segment at 326-345 (HFTKREPSSMEAAPPKKIRK) is disordered.

The protein belongs to the MoaE family. MOCS2B subfamily. As to quaternary structure, heterotetramer; composed of 2 small (Mocs2A) and 2 large (Mocs2B) subunits.

It localises to the cytoplasm. It catalyses the reaction 2 [molybdopterin-synthase sulfur-carrier protein]-C-terminal-Gly-aminoethanethioate + cyclic pyranopterin phosphate + H2O = molybdopterin + 2 [molybdopterin-synthase sulfur-carrier protein]-C-terminal Gly-Gly + 2 H(+). Its pathway is cofactor biosynthesis; molybdopterin biosynthesis. Its function is as follows. Catalytic subunit of the molybdopterin synthase complex, a complex that catalyzes the conversion of precursor Z into molybdopterin. Acts by mediating the incorporation of 2 sulfur atoms from thiocarboxylated Mocs2A into precursor Z to generate a dithiolene group. The protein is Molybdopterin synthase catalytic subunit of Drosophila sechellia (Fruit fly).